Reading from the N-terminus, the 181-residue chain is MEGFHATTIFAIAHNGGFAMAGDGQVTFGNAVVMKHTARKVRRLYHNNVLAGFAGSVADAFTLFEKFEAKLEEYNGNLQRASVELAKEWRSDRVLRKLEAMLIVMDKQALLLISGTGEVIQPDDGILAIGSGGNYALSAGRALKRHAPGLSAREIAVAALETAGEICVYTNDQIVVEELTE.

The active site involves Thr7. Na(+)-binding residues include Gly164, Cys167, and Thr170.

It belongs to the peptidase T1B family. HslV subfamily. As to quaternary structure, a double ring-shaped homohexamer of HslV is capped on each side by a ring-shaped HslU homohexamer. The assembly of the HslU/HslV complex is dependent on binding of ATP.

The protein localises to the cytoplasm. The enzyme catalyses ATP-dependent cleavage of peptide bonds with broad specificity.. With respect to regulation, allosterically activated by HslU binding. Functionally, protease subunit of a proteasome-like degradation complex believed to be a general protein degrading machinery. The chain is ATP-dependent protease subunit HslV from Shouchella clausii (strain KSM-K16) (Alkalihalobacillus clausii).